Here is a 154-residue protein sequence, read N- to C-terminus: tRNA (cytidine(34)-2'-O)-methyltransferase (154 aa).

The S-adenosyl-L-methionine site is built by leucine 78, glycine 100, leucine 122, and serine 130.

This sequence belongs to the class IV-like SAM-binding methyltransferase superfamily. RNA methyltransferase TrmH family. TrmL subfamily. As to quaternary structure, homodimer.

It localises to the cytoplasm. It catalyses the reaction cytidine(34) in tRNA + S-adenosyl-L-methionine = 2'-O-methylcytidine(34) in tRNA + S-adenosyl-L-homocysteine + H(+). The enzyme catalyses 5-carboxymethylaminomethyluridine(34) in tRNA(Leu) + S-adenosyl-L-methionine = 5-carboxymethylaminomethyl-2'-O-methyluridine(34) in tRNA(Leu) + S-adenosyl-L-homocysteine + H(+). Methylates the ribose at the nucleotide 34 wobble position in the two leucyl isoacceptors tRNA(Leu)(CmAA) and tRNA(Leu)(cmnm5UmAA). Catalyzes the methyl transfer from S-adenosyl-L-methionine to the 2'-OH of the wobble nucleotide. The polypeptide is tRNA (cytidine(34)-2'-O)-methyltransferase (Methylovorus glucosotrophus (strain SIP3-4)).